We begin with the raw amino-acid sequence, 355 residues long: S-adenosylmethionine:tRNA ribosyltransferase-isomerase (355 aa).

It belongs to the QueA family. As to quaternary structure, monomer.

Its subcellular location is the cytoplasm. It catalyses the reaction 7-aminomethyl-7-carbaguanosine(34) in tRNA + S-adenosyl-L-methionine = epoxyqueuosine(34) in tRNA + adenine + L-methionine + 2 H(+). It functions in the pathway tRNA modification; tRNA-queuosine biosynthesis. In terms of biological role, transfers and isomerizes the ribose moiety from AdoMet to the 7-aminomethyl group of 7-deazaguanine (preQ1-tRNA) to give epoxyqueuosine (oQ-tRNA). In Pectobacterium atrosepticum (strain SCRI 1043 / ATCC BAA-672) (Erwinia carotovora subsp. atroseptica), this protein is S-adenosylmethionine:tRNA ribosyltransferase-isomerase.